Consider the following 321-residue polypeptide: Cytochrome c biogenesis protein CcsA (321 aa).

Transmembrane regions (helical) follow at residues 1 to 21 (MIFI…ISVV), 36 to 56 (LSSS…GLLI), 70 to 90 (LYES…ILEV), 97 to 117 (GLGA…TSGL), 143 to 163 (ILLS…FLII), 229 to 249 (VIGL…VWAN), 256 to 276 (WSWD…AIYL), and 290 to 310 (AIIA…VDLL).

The protein belongs to the CcmF/CycK/Ccl1/NrfE/CcsA family. In terms of assembly, may interact with Ccs1.

Its subcellular location is the plastid. It is found in the chloroplast thylakoid membrane. Functionally, required during biogenesis of c-type cytochromes (cytochrome c6 and cytochrome f) at the step of heme attachment. This chain is Cytochrome c biogenesis protein CcsA, found in Cycas taitungensis (Prince sago).